Reading from the N-terminus, the 338-residue chain is Citramalyl-CoA lyase, mitochondrial (338 aa).

The transit peptide at M1–K20 directs the protein to the mitochondrion. Positions 48, 55, and 59 each coordinate substrate. Residues K55, K59, and K64 each carry the N6-acetyllysine modification. N6-acetyllysine; alternate is present on residues K80 and K90. An N6-succinyllysine; alternate mark is found at K80 and K90. Residue R105 participates in substrate binding. Mg(2+)-binding residues include E169 and D204. Residue I270–H271 coordinates substrate. K307 bears the N6-succinyllysine mark. Residue D318 is part of the active site.

This sequence belongs to the HpcH/HpaI aldolase family. Citrate lyase beta subunit-like subfamily. Homotrimer. It depends on Mg(2+) as a cofactor. In terms of tissue distribution, detected in brown fat, brain, liver, kidney, heart, skeletal muscle and ovary (at protein level).

It is found in the mitochondrion. The catalysed reaction is glyoxylate + acetyl-CoA + H2O = (S)-malate + CoA + H(+). It carries out the reaction propanoyl-CoA + glyoxylate + H2O = 3-methylmalate + CoA + H(+). It catalyses the reaction (3S)-citramalyl-CoA = pyruvate + acetyl-CoA. The enzyme catalyses (S)-malyl-CoA + H2O = (S)-malate + CoA + H(+). Functionally, mitochondrial citramalyl-CoA lyase indirectly involved in the vitamin B12 metabolism. Converts citramalyl-CoA into acetyl-CoA and pyruvate in the C5-dicarboxylate catabolism pathway. The C5-dicarboxylate catabolism pathway is required to detoxify itaconate, a vitamin B12-poisoning metabolite. Also acts as a malate synthase in vitro, converting glyoxylate and acetyl-CoA to malate. Also displays malyl-CoA thioesterase activity. Also acts as a beta-methylmalate synthase in vitro, by mediating conversion of glyoxylate and propionyl-CoA to beta-methylmalate. Also has very weak citramalate synthase activity in vitro. The chain is Citramalyl-CoA lyase, mitochondrial from Mus musculus (Mouse).